A 559-amino-acid polypeptide reads, in one-letter code: NAD-dependent malic enzyme 2 (559 aa).

The active-site Proton donor is the tyrosine 98. Arginine 151 contacts NAD(+). Lysine 169 serves as the catalytic Proton acceptor. 3 residues coordinate a divalent metal cation: glutamate 240, aspartate 241, and aspartate 264. The NAD(+) site is built by aspartate 264 and asparagine 413.

This sequence belongs to the malic enzymes family. Homotetramer. It depends on Mg(2+) as a cofactor. Mn(2+) is required as a cofactor.

It carries out the reaction (S)-malate + NAD(+) = pyruvate + CO2 + NADH. The enzyme catalyses oxaloacetate + H(+) = pyruvate + CO2. This chain is NAD-dependent malic enzyme 2, found in Vibrio vulnificus (strain YJ016).